We begin with the raw amino-acid sequence, 1101 residues long: Leucine-rich repeat receptor-like serine/threonine-protein kinase At1g17230 (1101 aa).

Residues 1–23 (MRGRICFLAIVILCSFSFILVRS) form the signal peptide. Residues 24 to 734 (LNEEGRVLLE…WLINGSQRQK (711 aa)) are Extracellular-facing. N-linked (GlcNAc...) asparagine glycans are attached at residues N39, N57, N78, and N97. LRR repeat units lie at residues 66-90 (LRTV…ICKL), 91-115 (HGLR…SLCR), 117-137 (LEVL…QLTM), 138-162 (IITL…IGNL), 163-186 (SSLQ…MAKL), 188-210 (QLRI…ISGC), 211-234 (ESLK…LEKL), 235-258 (QNLT…VGNI), 260-282 (RLEV…IGKL), 283-306 (TKMK…IGNL), 308-329 (DAAE…EFGH), 330-354 (ILNL…LGEL), 355-379 (TLLE…QFLP), 381-402 (LVDL…IGFY), 403-426 (SNFS…FCRF), 427-450 (QTLI…LKTC), 451-474 (KSLT…LFNL), 476-498 (NLTA…LGKL), 499-522 (KNLE…IGNL), 524-546 (KIVG…LGSC), 548-569 (TIQR…ELGQ), 570-593 (LVYL…SFGD), 595-618 (TRLM…LGKL), 619-643 (TSLQ…LGNL), 644-667 (QMLE…IGNL), and 669-692 (SLLI…VFQR). 2 N-linked (GlcNAc...) asparagine glycosylation sites follow: N161 and N174. Residues N236 and N257 are each glycosylated (N-linked (GlcNAc...) asparagine). N-linked (GlcNAc...) asparagine glycosylation is present at N368. The N-linked (GlcNAc...) asparagine glycan is linked to N404. N-linked (GlcNAc...) asparagine glycans are attached at residues N476, N490, N510, N521, and N529. N-linked (GlcNAc...) asparagine glycosylation is found at N626 and N631. N-linked (GlcNAc...) asparagine glycosylation is found at N674 and N728. Residues 735–755 (ILTITCIVIGSVFLITFLGLC) form a helical membrane-spanning segment. The Cytoplasmic segment spans residues 756–1101 (WTIKRREPAF…LEEANSSKEI (346 aa)). T788 and T796 each carry phosphothreonine. Positions 799 to 1081 (FSEDVVLGRG…ITEARGSSSL (283 aa)) constitute a Protein kinase domain. Residues 805–813 (LGRGACGTV) and K827 each bind ATP. Residues Y874 and Y913 each carry the phosphotyrosine modification. Catalysis depends on D926, which acts as the Proton acceptor. S960 is modified (phosphoserine). 2 positions are modified to phosphotyrosine: Y968 and Y975. The residue at position 976 (T976) is a Phosphothreonine. The segment at 1076–1101 (RGSSSLSSSSITSETPLEEANSSKEI) is disordered. Residues 1078-1088 (SSSLSSSSITS) show a composition bias toward low complexity.

The protein belongs to the protein kinase superfamily. Ser/Thr protein kinase family.

Its subcellular location is the cell membrane. The catalysed reaction is L-seryl-[protein] + ATP = O-phospho-L-seryl-[protein] + ADP + H(+). The enzyme catalyses L-threonyl-[protein] + ATP = O-phospho-L-threonyl-[protein] + ADP + H(+). The polypeptide is Leucine-rich repeat receptor-like serine/threonine-protein kinase At1g17230 (Arabidopsis thaliana (Mouse-ear cress)).